A 192-amino-acid polypeptide reads, in one-letter code: Leucine-rich repeat-containing protein 51 (192 aa).

LRR repeat units follow at residues 50–71 (MTQS…NHAV), 80–101 (NLAW…LTTF), and 103–124 (NLSV…NKLA). The LRRCT domain occupies 137-175 (NPIEEEKGYRQYVLCTLPHITTFDFSGVTKADRTTAEVW).

The protein localises to the cytoplasm. The sequence is that of Leucine-rich repeat-containing protein 51 from Bos taurus (Bovine).